Consider the following 416-residue polypeptide: Tyrosine permease (416 aa).

11 consecutive transmembrane segments (helical) span residues 13-33 (GTML…PIAM), 34-54 (AGIW…MMLL), 86-106 (VVVG…YISG), 127-147 (LSVI…SLLV), 153-173 (VLII…IWHV), 192-212 (LPYI…HGNV), 231-251 (IFIG…VTMG), 260-280 (PIIA…GLFT), 286-306 (LILT…ATLG), 337-357 (VVCF…GLAF), and 389-409 (ILNL…LDVF).

It belongs to the amino acid/polyamine transporter 2 family. Mtr/TnaB/TyrP permease subfamily.

It localises to the cell inner membrane. This chain is Tyrosine permease (tutB), found in Enterobacter agglomerans (Erwinia herbicola).